A 273-amino-acid chain; its full sequence is Formamidopyrimidine-DNA glycosylase (273 aa).

P2 (schiff-base intermediate with DNA) is an active-site residue. The active-site Proton donor is the E3. K57 serves as the catalytic Proton donor; for beta-elimination activity. The DNA site is built by H90, R109, and K150. The segment at 235-269 adopts an FPG-type zinc-finger fold; that stretch reads KVYGRAGKECPVCSSKIEEEKIGQRNSFWCGKCQF. R259 (proton donor; for delta-elimination activity) is an active-site residue.

This sequence belongs to the FPG family. As to quaternary structure, monomer. It depends on Zn(2+) as a cofactor.

It catalyses the reaction Hydrolysis of DNA containing ring-opened 7-methylguanine residues, releasing 2,6-diamino-4-hydroxy-5-(N-methyl)formamidopyrimidine.. The catalysed reaction is 2'-deoxyribonucleotide-(2'-deoxyribose 5'-phosphate)-2'-deoxyribonucleotide-DNA = a 3'-end 2'-deoxyribonucleotide-(2,3-dehydro-2,3-deoxyribose 5'-phosphate)-DNA + a 5'-end 5'-phospho-2'-deoxyribonucleoside-DNA + H(+). Functionally, involved in base excision repair of DNA damaged by oxidation or by mutagenic agents. Acts as a DNA glycosylase that recognizes and removes damaged bases. Has a preference for oxidized purines, such as 7,8-dihydro-8-oxoguanine (8-oxoG). Has AP (apurinic/apyrimidinic) lyase activity and introduces nicks in the DNA strand. Cleaves the DNA backbone by beta-delta elimination to generate a single-strand break at the site of the removed base with both 3'- and 5'-phosphates. The polypeptide is Formamidopyrimidine-DNA glycosylase (Aliivibrio fischeri (strain MJ11) (Vibrio fischeri)).